Consider the following 321-residue polypeptide: NADH-ubiquinone oxidoreductase chain 1 (321 aa).

8 helical membrane passes run 5-25 (LVTL…AFLT), 74-94 (LLIL…APIP), 104-124 (LGLL…LWAG), 151-171 (GIIL…LLTI), 175-195 (YTWL…STLA), 227-247 (FFLA…ILFI), 256-276 (ELFL…FLWI), and 296-316 (FLPM…SISG).

This sequence belongs to the complex I subunit 1 family.

Its subcellular location is the mitochondrion inner membrane. The enzyme catalyses a ubiquinone + NADH + 5 H(+)(in) = a ubiquinol + NAD(+) + 4 H(+)(out). Functionally, core subunit of the mitochondrial membrane respiratory chain NADH dehydrogenase (Complex I) that is believed to belong to the minimal assembly required for catalysis. Complex I functions in the transfer of electrons from NADH to the respiratory chain. The immediate electron acceptor for the enzyme is believed to be ubiquinone. The polypeptide is NADH-ubiquinone oxidoreductase chain 1 (MT-ND1) (Varanus baritji (Black-spotted ridge-tailed monitor)).